The following is a 702-amino-acid chain: Putative endo-beta-N-acetylglucosaminidase (702 aa).

A signal peptide spans 1 to 23 (MKKVRFIFLALLFFLASPEGAMA). Cell wall-binding repeat units follow at residues 42–63 (ANEW…DANY), 65–84 (ENEW…GGYM), 86–105 (KSEW…DGKM), 124–145 (IEDW…DGQH), 147–166 (EKEW…GGYL), 185–206 (QQGW…NGNY), 208–227 (DKEW…GGYM), 229–248 (ANEW…DGKI), 250–271 (EKEW…GGYM), 273–292 (ANEW…DGKM), 294–315 (EKEW…GGYM), 317–336 (ANEW…DGKI), 338–359 (EKEW…GGYM), 361–380 (ANEW…DGKM), and 382–403 (EKEW…GGYM).

It belongs to the glycosyl hydrolase 73 family.

The protein localises to the secreted. The catalysed reaction is an N(4)-(oligosaccharide-(1-&gt;3)-[oligosaccharide-(1-&gt;6)]-beta-D-Man-(1-&gt;4)-beta-D-GlcNAc-(1-&gt;4)-alpha-D-GlcNAc)-L-asparaginyl-[protein] + H2O = an oligosaccharide-(1-&gt;3)-[oligosaccharide-(1-&gt;6)]-beta-D-Man-(1-&gt;4)-D-GlcNAc + N(4)-(N-acetyl-beta-D-glucosaminyl)-L-asparaginyl-[protein]. Plays an important role in cell wall degradation and cell separation. The polypeptide is Putative endo-beta-N-acetylglucosaminidase (lytB) (Streptococcus pneumoniae (strain ATCC BAA-255 / R6)).